We begin with the raw amino-acid sequence, 191 residues long: Small ribosomal subunit protein bS6 (191 aa).

The interval 168 to 191 is disordered; that stretch reads KVNLTRKPTPNKSSENKQKVEKQA. The span at 181–191 shows a compositional bias: basic and acidic residues; the sequence is SENKQKVEKQA.

This sequence belongs to the bacterial ribosomal protein bS6 family.

Binds together with bS18 to 16S ribosomal RNA. The protein is Small ribosomal subunit protein bS6 of Mycoplasmoides gallisepticum (strain R(low / passage 15 / clone 2)) (Mycoplasma gallisepticum).